The primary structure comprises 585 residues: MKCANAAALLFFVLCDIGVHGGEIVAELLHSNVTVKWQTDYERQTVDFSIWFGAKTPDLLFLGFSDFGDMNSSDVLMYDNVKREIMDSYTNRDYKIIPDLSQDFQQLRRRKDHFVVRRKLTTCDSRDYAFQRGTTQFYIAASFGYRNLVDIRDKKWILDKKFGKVIEGPTDQPSTDEGVSSLERDVQLVIVNSNSPDPVPNVETTYECIIRKMPFDTVHKTYHIVRMEPYITPGNEHLVHHMEVFLCRDEVEEWSGNCNDPKKPKKSKSCSHVIAAWAMGEGPIHYPREAGLPIGGKGKNEYVMVEIHYNNPELHKGVMDTSGFQFYVTGLLRIYDAGIMELGLIYSDANSVPPNQKAWAMNGYCPSQCTQNLPEEGINIFASQMHAHLTGRKLWTSQYRDGVQIGDVNRDEHYSPHWQHLQQLRPMVRVMPGDTLVTTCVYDTRRRSNVTFGGYGITDEMCVNYIYYYPASEVEVCKSAISNSTLRAYFSQRHGMDGKTMKISDMYNGVKDWSNGVDEEFYNVLNVGNVNMNCLKSNGESFEFKSKDPRQGWENMARPRLFSGSFIRTRDRFQCPAINDMINFE.

The N-terminal stretch at 1 to 21 (MKCANAAALLFFVLCDIGVHG) is a signal peptide. Residues 31-142 (SNVTVKWQTD…GTTQFYIAAS (112 aa)) enclose the DOMON domain. N-linked (GlcNAc...) asparagine glycans are attached at residues Asn32 and Asn71. The active site involves Tyr206. 2 disulfide bridges follow: Cys208–Cys258 and Cys247–Cys270. His240 and His241 together coordinate Cu(2+). His308, His386, and His388 together coordinate Cu(2+). 3 cysteine pairs are disulfide-bonded: Cys365-Cys477, Cys369-Cys534, and Cys440-Cys462. His386 is a catalytic residue. Asn449 carries N-linked (GlcNAc...) asparagine glycosylation. Met461 is a binding site for Cu(2+). An N-linked (GlcNAc...) asparagine glycan is attached at Asn483.

Belongs to the copper type II ascorbate-dependent monooxygenase family. The cofactor is Cu(2+).

The protein localises to the cytoplasmic vesicle. It localises to the secretory vesicle. It is found in the synaptic vesicle. It carries out the reaction tyramine + L-ascorbate + O2 = (R)-octopamine + L-dehydroascorbate + H2O. Functionally, catalyzes the hydroxylation of tyramine into octopamine, a neurotransmitter involved in pharyngeal pumping and egg laying. The polypeptide is Tyramine beta-hydroxylase (tbh-1) (Caenorhabditis briggsae).